A 483-amino-acid polypeptide reads, in one-letter code: Threonine synthase-like 2 (483 aa).

Lys-113 bears the N6-(pyridoxal phosphate)lysine mark.

This sequence belongs to the threonine synthase family. Requires pyridoxal 5'-phosphate as cofactor.

Acts as a catabolic phospho-lyase on both gamma- and beta-phosphorylated substrates. Degrades O-phospho-threonine (PThr) to alpha-ketobutyrate, ammonia and phosphate. Also degrades O-phospho-homoserine (PHS), but this is not its physiological substrate. The polypeptide is Threonine synthase-like 2 (Thnsl2) (Mus musculus (Mouse)).